The sequence spans 301 residues: Formamidopyrimidine-DNA glycosylase (301 aa).

P2 (schiff-base intermediate with DNA) is an active-site residue. E3 serves as the catalytic Proton donor. K58 serves as the catalytic Proton donor; for beta-elimination activity. Positions 109, 131, and 174 each coordinate DNA. An FPG-type zinc finger spans residues 265-301; sequence SVYDREGQACRTPGCGGTVARIVQAGRSTFYCATCQK. R291 functions as the Proton donor; for delta-elimination activity in the catalytic mechanism.

It belongs to the FPG family. In terms of assembly, monomer. Zn(2+) is required as a cofactor.

It carries out the reaction Hydrolysis of DNA containing ring-opened 7-methylguanine residues, releasing 2,6-diamino-4-hydroxy-5-(N-methyl)formamidopyrimidine.. It catalyses the reaction 2'-deoxyribonucleotide-(2'-deoxyribose 5'-phosphate)-2'-deoxyribonucleotide-DNA = a 3'-end 2'-deoxyribonucleotide-(2,3-dehydro-2,3-deoxyribose 5'-phosphate)-DNA + a 5'-end 5'-phospho-2'-deoxyribonucleoside-DNA + H(+). Involved in base excision repair of DNA damaged by oxidation or by mutagenic agents. Acts as a DNA glycosylase that recognizes and removes damaged bases. Has a preference for oxidized purines, such as 7,8-dihydro-8-oxoguanine (8-oxoG). Has AP (apurinic/apyrimidinic) lyase activity and introduces nicks in the DNA strand. Cleaves the DNA backbone by beta-delta elimination to generate a single-strand break at the site of the removed base with both 3'- and 5'-phosphates. The chain is Formamidopyrimidine-DNA glycosylase from Rhizobium leguminosarum bv. trifolii (strain WSM2304).